Consider the following 629-residue polypeptide: DNA-directed RNA polymerase III subunit rpc3 (629 aa).

Disordered stretches follow at residues 136–164 (ANGVPEEHGEHEEDEEQSNGLNGEHSNEQ), 247–294 (PRGA…EMGY), and 373–420 (QLDL…SGGN). Positions 257-268 (RRADEPNKKCRT) are enriched in basic and acidic residues. The span at 272 to 293 (SVDENDEHDEEEENEWSDDEMG) shows a compositional bias: acidic residues. Residues 374 to 388 (LDLSSSTGPMDSSQP) show a composition bias toward polar residues. The span at 389–409 (DGRRGKRPWDGDVEGTNHEEA) shows a compositional bias: basic and acidic residues. The segment at 556-577 (TYKAMSRCLQRLRFERSRIKDF) is leucine-zipper.

The protein belongs to the RNA polymerase beta chain family. In terms of assembly, component of the RNA polymerase III (Pol III) complex consisting of 17 subunits.

The protein localises to the nucleus. Its function is as follows. DNA-dependent RNA polymerase catalyzes the transcription of DNA into RNA using the four ribonucleoside triphosphates as substrates. Specific core component of RNA polymerase III which synthesizes small RNAs, such as 5S rRNA and tRNAs. The chain is DNA-directed RNA polymerase III subunit rpc3 (rpc82) from Aspergillus fumigatus (strain ATCC MYA-4609 / CBS 101355 / FGSC A1100 / Af293) (Neosartorya fumigata).